Reading from the N-terminus, the 668-residue chain is Transketolase 2 (668 aa).

Histidine 26 contacts substrate. Residues histidine 66 and glycine 114 to leucine 116 each bind thiamine diphosphate. A Mg(2+)-binding site is contributed by aspartate 155. 2 residues coordinate thiamine diphosphate: glycine 156 and asparagine 185. Mg(2+) is bound by residues asparagine 185 and isoleucine 187. Substrate is bound by residues histidine 261, arginine 358, and serine 385. Histidine 261 is a binding site for thiamine diphosphate. Glutamate 413 (proton donor) is an active-site residue. Residue phenylalanine 439 participates in thiamine diphosphate binding. Positions 463, 471, and 522 each coordinate substrate.

Belongs to the transketolase family. In terms of assembly, homodimer. It depends on Mg(2+) as a cofactor. Requires Ca(2+) as cofactor. The cofactor is Mn(2+). Co(2+) is required as a cofactor. Thiamine diphosphate serves as cofactor.

It carries out the reaction D-sedoheptulose 7-phosphate + D-glyceraldehyde 3-phosphate = aldehydo-D-ribose 5-phosphate + D-xylulose 5-phosphate. In terms of biological role, catalyzes the transfer of a two-carbon ketol group from a ketose donor to an aldose acceptor, via a covalent intermediate with the cofactor thiamine pyrophosphate. In Pasteurella multocida (strain Pm70), this protein is Transketolase 2 (tktB).